Consider the following 180-residue polypeptide: Meiotic recombination protein rec15 (180 aa).

Homomer. Interacts (via C-terminus) with hop1 (via C-terminus); the interaction is direct. Interacts (via C-terminus) with rec10; the interaction is direct. Interacts with mde2; the interaction is direct.

The protein localises to the nucleus. The protein resides in the chromosome. In terms of biological role, required during the early stages of meiosis for meiotic recombination. This chain is Meiotic recombination protein rec15, found in Schizosaccharomyces pombe (strain 972 / ATCC 24843) (Fission yeast).